The following is a 432-amino-acid chain: MDTSQVRILPKLDISAGHNFTKPSKRINESQDVAEFLSSKAYVDLMTFLLQLNRSLFPTKLPDGRVLTWELNSEAVEYSAPVRQLQQLLSKLEAILDEAPPDTGPRRFGNISFRRWYEMVESRAASLLEECLSKEILQMPSSDPGAPTAEVELLAYFLGSWGSPQRLDYGTGHELSFLAFLAGIWKLHGFPENSPGVEERAIVLGVIQPYLELVRTIIKRYTLEPAGSHGVWGLDDHSFIPYIFGSAQLAPAISESDRIPEEGSLSDAPAPGGVTKANVVERERKHNLYFSAIGFIYDVKRGPFWEHSPMLYDISGIQAGWAKINKGMIKMYNAEVLSKFPVVQHFPFGSLFSWERDPNAPSPAADAHIAATTRRTDEASTSSYLYSPKYIKATSWSYGSYKGALGNISTRWTGSPWRFYVCRPYANESSVG.

Belongs to the PTPA-type PPIase family.

It is found in the cytoplasm. The protein resides in the nucleus. The catalysed reaction is [protein]-peptidylproline (omega=180) = [protein]-peptidylproline (omega=0). Functionally, PPIases accelerate the folding of proteins. It catalyzes the cis-trans isomerization of proline imidic peptide bonds in oligopeptides. Acts as a regulatory subunit for PP2A-like phosphatases modulating their activity or substrate specificity, probably by inducing a conformational change in the catalytic subunit, a direct target of the PPIase. Can reactivate inactive phosphatase PP2A-phosphatase methylesterase complexes (PP2Ai) in presence of ATP and Mg(2+) by dissociating the inactive form from the complex. The chain is Serine/threonine-protein phosphatase 2A activator 1 (rrd1) from Emericella nidulans (strain FGSC A4 / ATCC 38163 / CBS 112.46 / NRRL 194 / M139) (Aspergillus nidulans).